Here is a 318-residue protein sequence, read N- to C-terminus: tRNA-cytidine(32) 2-sulfurtransferase (318 aa).

Positions 52 to 57 match the PP-loop motif motif; that stretch reads SGGKDS. [4Fe-4S] cluster-binding residues include Cys127, Cys130, and Cys218.

Belongs to the TtcA family. In terms of assembly, homodimer. It depends on Mg(2+) as a cofactor. The cofactor is [4Fe-4S] cluster.

Its subcellular location is the cytoplasm. It carries out the reaction cytidine(32) in tRNA + S-sulfanyl-L-cysteinyl-[cysteine desulfurase] + AH2 + ATP = 2-thiocytidine(32) in tRNA + L-cysteinyl-[cysteine desulfurase] + A + AMP + diphosphate + H(+). Its pathway is tRNA modification. Functionally, catalyzes the ATP-dependent 2-thiolation of cytidine in position 32 of tRNA, to form 2-thiocytidine (s(2)C32). The sulfur atoms are provided by the cysteine/cysteine desulfurase (IscS) system. In Actinobacillus pleuropneumoniae serotype 7 (strain AP76), this protein is tRNA-cytidine(32) 2-sulfurtransferase.